Reading from the N-terminus, the 37-residue chain is uncharacterized protein (37 aa).

Belongs to the poxviridae A56.5 protein family.

This is an uncharacterized protein from Vaccinia virus (strain Western Reserve) (VACV).